The primary structure comprises 382 residues: Chaperone protein DnaJ (382 aa).

One can recognise a J domain in the interval 5–69; that stretch reads DYYEILGVSK…EKRARYDRFG (65 aa). Residues 137-219 form a CR-type zinc finger; that stretch reads GKETEIEIPR…CGGTGRVKRR (83 aa). Zn(2+) is bound by residues C150, C153, C167, C170, C193, C196, C207, and C210. 4 CXXCXGXG motif repeats span residues 150–157, 167–174, 193–200, and 207–214; these read CDTCQGSG, CPHCHGSG, CPVCGGTG, and CPTCGGTG. A disordered region spans residues 154–175; sequence QGSGAKPGTSPTSCPHCHGSGQ.

The protein belongs to the DnaJ family. As to quaternary structure, homodimer. Zn(2+) serves as cofactor.

It localises to the cytoplasm. Its function is as follows. Participates actively in the response to hyperosmotic and heat shock by preventing the aggregation of stress-denatured proteins and by disaggregating proteins, also in an autonomous, DnaK-independent fashion. Unfolded proteins bind initially to DnaJ; upon interaction with the DnaJ-bound protein, DnaK hydrolyzes its bound ATP, resulting in the formation of a stable complex. GrpE releases ADP from DnaK; ATP binding to DnaK triggers the release of the substrate protein, thus completing the reaction cycle. Several rounds of ATP-dependent interactions between DnaJ, DnaK and GrpE are required for fully efficient folding. Also involved, together with DnaK and GrpE, in the DNA replication of plasmids through activation of initiation proteins. The sequence is that of Chaperone protein DnaJ from Geobacillus kaustophilus (strain HTA426).